We begin with the raw amino-acid sequence, 879 residues long: Phosphoenolpyruvate carboxylase (879 aa).

Active-site residues include histidine 138 and lysine 545.

Belongs to the PEPCase type 1 family. It depends on Mg(2+) as a cofactor.

It carries out the reaction oxaloacetate + phosphate = phosphoenolpyruvate + hydrogencarbonate. Functionally, forms oxaloacetate, a four-carbon dicarboxylic acid source for the tricarboxylic acid cycle. In Actinobacillus pleuropneumoniae serotype 5b (strain L20), this protein is Phosphoenolpyruvate carboxylase.